Here is a 386-residue protein sequence, read N- to C-terminus: GTPase Obg (386 aa).

The Obg domain occupies 1–159 (MKFVDEASIL…RELLLELMLL (159 aa)). The segment at 127–147 (NTRFKSSVNRTPRQKTNGTPG) is disordered. Positions 129 to 145 (RFKSSVNRTPRQKTNGT) are enriched in polar residues. The region spanning 160-333 (ADVGMLGMPN…LCWDVMTFII (174 aa)) is the OBG-type G domain. Residues 166–173 (GMPNAGKS), 191–195 (FTTLV), 213–216 (DIPG), 283–286 (NKID), and 314–316 (SAA) each bind GTP. Mg(2+)-binding residues include Ser173 and Thr193.

The protein belongs to the TRAFAC class OBG-HflX-like GTPase superfamily. OBG GTPase family. As to quaternary structure, monomer. The cofactor is Mg(2+).

The protein localises to the cytoplasm. Its function is as follows. An essential GTPase which binds GTP, GDP and possibly (p)ppGpp with moderate affinity, with high nucleotide exchange rates and a fairly low GTP hydrolysis rate. Plays a role in control of the cell cycle, stress response, ribosome biogenesis and in those bacteria that undergo differentiation, in morphogenesis control. This is GTPase Obg from Escherichia coli (strain UTI89 / UPEC).